A 95-amino-acid chain; its full sequence is Ragulator complex protein LAMTOR4 homolog (95 aa).

Belongs to the LAMTOR4 family. Part of the Ragulator complex.

It localises to the lysosome. In terms of biological role, regulator of the TOR pathway, a signaling cascade that promotes cell growth in response to growth factors, energy levels, and amino acids. As part of the Ragulator complex, may activate the TOR signaling cascade in response to amino acids. This chain is Ragulator complex protein LAMTOR4 homolog, found in Nematostella vectensis (Starlet sea anemone).